A 1222-amino-acid polypeptide reads, in one-letter code: BOS complex subunit NOMO3 (1222 aa).

An N-terminal signal peptide occupies residues 1–31 (MLVGQGAGPLGPAVVTAAVVLLLSGVGPAHG). The Extracellular portion of the chain corresponds to 32 to 1155 (SEDIVVGCGG…NPTRKLPEQD (1124 aa)). Asparagine 50, asparagine 218, and asparagine 618 each carry an N-linked (GlcNAc...) asparagine glycan. The helical transmembrane segment at 1156–1176 (IAQGSYIALPLTLLVLLAGYN) threads the bilayer. Residues 1177 to 1222 (HDKLIPLLLQLTSRLQGVGALGQAASDNSGPEDAKRQAKKQKTRRT) are Cytoplasmic-facing. Positions 1198–1222 (GQAASDNSGPEDAKRQAKKQKTRRT) are disordered. Residues 1213–1222 (QAKKQKTRRT) are compositionally biased toward basic residues.

Component of the back of Sec61 (BOS) complex, composed of NCLN/Nicalin, NOMO (NOMO1, NOMO2 or NOMO3) and TMEM147. The BOS complex is part of the multi-pass translocon (MPT) complex, composed of three subcomplexes, the GEL complex (composed of RAB5IF/OPTI and TMCO1), the BOS complex (composed of NCLN/Nicalin, NOMO and TMEM147) and the PAT complex (composed of WDR83OS/Asterix and CCDC47). The MPT complex associates with the SEC61 complex. Due to the strong similarity between NOMO1, NOMO2 and NOMO3, similar interaction pattern probably occur for the three gene copies.

The protein resides in the endoplasmic reticulum membrane. Component of the multi-pass translocon (MPT) complex that mediates insertion of multi-pass membrane proteins into the lipid bilayer of membranes. The MPT complex takes over after the SEC61 complex: following membrane insertion of the first few transmembrane segments of proteins by the SEC61 complex, the MPT complex occludes the lateral gate of the SEC61 complex to promote insertion of subsequent transmembrane regions. This chain is BOS complex subunit NOMO3 (NOMO3), found in Homo sapiens (Human).